The following is a 331-amino-acid chain: HTH-type transcriptional regulator GntR (331 aa).

The region spanning 6-60 (PVLQDVADRVGVTKMTVSRFLRNPEQVSVALRGKIAAALDELGYIPNRAPDILSN) is the HTH lacI-type domain. The segment at residues 8-27 (LQDVADRVGVTKMTVSRFLR) is a DNA-binding region (H-T-H motif).

It participates in carbohydrate acid metabolism; D-gluconate degradation [regulation]. Negative regulator for the gluconate utilization system GNT-I, the gntUKR operon. The polypeptide is HTH-type transcriptional regulator GntR (gntR) (Escherichia coli O6:H1 (strain CFT073 / ATCC 700928 / UPEC)).